We begin with the raw amino-acid sequence, 252 residues long: Small ribosomal subunit protein eS4 (252 aa).

The S4 RNA-binding domain maps to 43-106 (LPLLILVRDM…NKYYRVIPVP (64 aa)).

The protein belongs to the eukaryotic ribosomal protein eS4 family.

This is Small ribosomal subunit protein eS4 from Desulfurococcus amylolyticus (strain DSM 18924 / JCM 16383 / VKM B-2413 / 1221n) (Desulfurococcus kamchatkensis).